The chain runs to 126 residues: Fluoride-specific ion channel FluC (126 aa).

4 helical membrane-spanning segments follow: residues 2–22 (LITV…RYLI), 37–57 (VGVL…VVLA), 65–85 (LSPF…AFSL), and 99–119 (AALY…LGMM). Na(+) contacts are provided by Gly-75 and Thr-78.

It belongs to the fluoride channel Fluc/FEX (TC 1.A.43) family.

It localises to the cell inner membrane. The enzyme catalyses fluoride(in) = fluoride(out). With respect to regulation, na(+) is not transported, but it plays an essential structural role and its presence is essential for fluoride channel function. Its function is as follows. Fluoride-specific ion channel. Important for reducing fluoride concentration in the cell, thus reducing its toxicity. This chain is Fluoride-specific ion channel FluC, found in Ruegeria sp. (strain TM1040) (Silicibacter sp.).